Reading from the N-terminus, the 202-residue chain is ATP-dependent Clp protease proteolytic subunit (202 aa).

Ser-98 functions as the Nucleophile in the catalytic mechanism. His-123 is an active-site residue.

Belongs to the peptidase S14 family. Fourteen ClpP subunits assemble into 2 heptameric rings which stack back to back to give a disk-like structure with a central cavity, resembling the structure of eukaryotic proteasomes.

The protein resides in the cytoplasm. It catalyses the reaction Hydrolysis of proteins to small peptides in the presence of ATP and magnesium. alpha-casein is the usual test substrate. In the absence of ATP, only oligopeptides shorter than five residues are hydrolyzed (such as succinyl-Leu-Tyr-|-NHMec, and Leu-Tyr-Leu-|-Tyr-Trp, in which cleavage of the -Tyr-|-Leu- and -Tyr-|-Trp bonds also occurs).. Cleaves peptides in various proteins in a process that requires ATP hydrolysis. Has a chymotrypsin-like activity. Plays a major role in the degradation of misfolded proteins. This is ATP-dependent Clp protease proteolytic subunit from Magnetococcus marinus (strain ATCC BAA-1437 / JCM 17883 / MC-1).